The following is a 730-amino-acid chain: Elongation factor 2 (730 aa).

The region spanning 18–238 is the tr-type G domain; that stretch reads DQIRNFGVIA…YSEGKVDELV (221 aa). Residues 27 to 34, 93 to 97, and 147 to 150 each bind GTP; these read AHVDHGKT, DTPGH, and NKVD. Residue H595 is modified to Diphthamide. Positions 711-730 are disordered; sequence RKRKGLAPDPPTVSEFIDRE.

This sequence belongs to the TRAFAC class translation factor GTPase superfamily. Classic translation factor GTPase family. EF-G/EF-2 subfamily.

The protein localises to the cytoplasm. In terms of biological role, catalyzes the GTP-dependent ribosomal translocation step during translation elongation. During this step, the ribosome changes from the pre-translocational (PRE) to the post-translocational (POST) state as the newly formed A-site-bound peptidyl-tRNA and P-site-bound deacylated tRNA move to the P and E sites, respectively. Catalyzes the coordinated movement of the two tRNA molecules, the mRNA and conformational changes in the ribosome. This is Elongation factor 2 from Cenarchaeum symbiosum (strain A).